The chain runs to 950 residues: UvrABC system protein A (950 aa).

36-43 (GKSGSGKS) provides a ligand contact to ATP. Residues 260–287 (CPLCGFSLPLIEPRLFSFNSPFGACSEC) form a C4-type zinc finger. ABC transporter domains are found at residues 317–599 (FKTS…KNSL) and 619–947 (ADKG…MFLK). 651–658 (GVSGSGKS) serves as a coordination point for ATP. A C4-type zinc finger spans residues 750-776 (CEKCQGDGYLNIQMHFLPDVFVPCDLC).

The protein belongs to the ABC transporter superfamily. UvrA family. In terms of assembly, forms a heterotetramer with UvrB during the search for lesions.

It localises to the cytoplasm. Functionally, the UvrABC repair system catalyzes the recognition and processing of DNA lesions. UvrA is an ATPase and a DNA-binding protein. A damage recognition complex composed of 2 UvrA and 2 UvrB subunits scans DNA for abnormalities. When the presence of a lesion has been verified by UvrB, the UvrA molecules dissociate. In Borreliella burgdorferi (strain ATCC 35210 / DSM 4680 / CIP 102532 / B31) (Borrelia burgdorferi), this protein is UvrABC system protein A.